The sequence spans 123 residues: uncharacterized protein (123 aa).

Residues 35–100 (SQDHGDDPAE…SSGAPASQHC (66 aa)) are disordered. Residues 37-48 (DHGDDPAERGRT) are compositionally biased toward basic and acidic residues. A compositionally biased stretch (low complexity) spans 85–97 (ALPASPSSGAPAS).

This is an uncharacterized protein from Homo sapiens (Human).